The chain runs to 37 residues: Cytochrome b6-f complex subunit 7 (37 aa).

The chain crosses the membrane as a helical span at residues 11-29 (AILSIVLVLVGLAWGFLLL).

It belongs to the PetM family. As to quaternary structure, the 4 large subunits of the cytochrome b6-f complex are cytochrome b6, subunit IV (17 kDa polypeptide, PetD), cytochrome f and the Rieske protein, while the 4 small subunits are PetG, PetL, PetM and PetN. The complex functions as a dimer.

The protein resides in the cellular thylakoid membrane. Functionally, component of the cytochrome b6-f complex, which mediates electron transfer between photosystem II (PSII) and photosystem I (PSI), cyclic electron flow around PSI, and state transitions. The protein is Cytochrome b6-f complex subunit 7 of Gloeothece citriformis (strain PCC 7424) (Cyanothece sp. (strain PCC 7424)).